Consider the following 179-residue polypeptide: Macro domain-containing protein XCC3184 (179 aa).

The 175-residue stretch at 1 to 175 (MRIEVWQGDI…AYHQALATQE (175 aa)) folds into the Macro domain.

The protein belongs to the MacroD-type family.

In Xanthomonas campestris pv. campestris (strain ATCC 33913 / DSM 3586 / NCPPB 528 / LMG 568 / P 25), this protein is Macro domain-containing protein XCC3184.